The primary structure comprises 71 residues: UPF0337 protein RPA4418 (71 aa).

Residues 1-54 form a disordered region; it reads MGSTMDKIKGQANELAGKAKQGIGEATGSDKLKGEGAIQEAKGHGQQALGNAKD.

This sequence belongs to the UPF0337 (CsbD) family.

This is UPF0337 protein RPA4418 from Rhodopseudomonas palustris (strain ATCC BAA-98 / CGA009).